The following is a 745-amino-acid chain: uncharacterized protein (745 aa).

The HTH araC/xylS-type domain occupies Asn-158–Asp-256. DNA-binding regions (H-T-H motif) lie at residues Ser-175–Leu-196 and Ile-223–Thr-246.

This is an uncharacterized protein from Staphylococcus aureus (strain Mu50 / ATCC 700699).